A 712-amino-acid polypeptide reads, in one-letter code: Copper amine oxidase 1 (712 aa).

Substrate is bound at residue 319 to 330 (AFDLGEYGAGYL). D321 (proton acceptor) is an active-site residue. C340 and C366 form a disulfide bridge. Position 404 to 409 (404 to 409 (AANYEY)) interacts with substrate. Residue Y407 is the Schiff-base intermediate with substrate; via topaquinone of the active site. Y407 is subject to 2',4',5'-topaquinone. Positions 458 and 460 each coordinate Cu cation. Mn(2+) is bound by residues D616 and I617. H627 contributes to the Cu cation binding site.

Belongs to the copper/topaquinone oxidase family. As to quaternary structure, homodimer. Cu cation serves as cofactor. It depends on Zn(2+) as a cofactor. L-topaquinone is required as a cofactor. Requires Mn(2+) as cofactor. In terms of processing, topaquinone (TPQ) is generated by copper-dependent autoxidation of a specific tyrosyl residue.

The protein resides in the cytoplasm. It catalyses the reaction a primary methyl amine + O2 + H2O = an aldehyde + H2O2 + NH4(+). In terms of biological role, copper amine oxidase involved in the metabolism of xenobiotic and biogenic amines. Capable of catalyzing the oxidative deamination of primary amines such as ethylamine as alternate sources of nitrogen to support growth. The protein is Copper amine oxidase 1 (cao1) of Schizosaccharomyces pombe (strain 972 / ATCC 24843) (Fission yeast).